The sequence spans 107 residues: Iron-binding protein IscA (107 aa).

Fe cation contacts are provided by cysteine 35, cysteine 99, and cysteine 101.

This sequence belongs to the HesB/IscA family. As to quaternary structure, homodimer; may form tetramers and higher multimers. Fe cation is required as a cofactor.

Its function is as follows. Is able to transfer iron-sulfur clusters to apo-ferredoxin. Multiple cycles of [2Fe2S] cluster formation and transfer are observed, suggesting that IscA acts catalytically. Recruits intracellular free iron so as to provide iron for the assembly of transient iron-sulfur cluster in IscU in the presence of IscS, L-cysteine and the thioredoxin reductase system TrxA/TrxB. The polypeptide is Iron-binding protein IscA (Proteus mirabilis (strain HI4320)).